The chain runs to 123 residues: TYMS opposite strand protein (123 aa).

The segment at 57–111 (MRPLPRRIEVRTKRGPQRPAAPERSPQPRLPPSRHPSRRGPRRHLSGCSAPACRI) is disordered. Residues 91–101 (HPSRRGPRRHL) are compositionally biased toward basic residues.

This is TYMS opposite strand protein (TYMSOS) from Homo sapiens (Human).